Consider the following 724-residue polypeptide: MELPNQHKQTAAEGFVSFLNWLCNPWRRQRTVNAAVAFQKDLLAIEDSEHLDDINECFEESAGAQSQRTKVVADGAYAPAKSNRTRRVRKQKKHKFVKYLVNEARAEFGLPKPTEANRLMVQHFLLRVCKDWGVVTAHVHGNVALALPLVFIPTEDDLLSRALMNTHATRAAVRGMDNVQGEGWWNNRLGIGGQVGLAFRSKXGCLERRPGFSTSVSRGEHPDLVVIPSGRPEKQRQLLRYSGIGGHLLIGIHNNSLSNLRRGLMERVFYVEGPNGLQDAPKPVKGAFRTLDKFRDLYTKNSWRHTPVTSEQFLMNYTGRKLTIYREAVDSLSHQPLSSRDAKLKTFVKAEKLNLSKKPDPAPRVIQPRSPRYNVCLGRYLRHYEHHAFKTIAKCFGEITVFKGFTLEQQGEIMRSKWNKYVNPVAVGLDASRFDQHVSVEALEYEHEFYLRDYPNDKQLKWLLKQQLCNVGTAFASDGIIKYKKKGCRMSGDMNTSLGNCILMCAMVYGLKEHLNINLSLANNGDDCVIVCEKADLKKLTSSIEPYFKQFGFKMEVEKPVDIFERIEFCQTQPVFDGSQYIMVRKPSVVTSKDVTSLIPCQTKAQYAEWLQAVGECGMSINGGIPVMQNFYQKLQTGIRRTKFTKTGEFQTNGLGYHSRYMHRVARVPSPETRLSFYLAFGITPDLQEALEIFYDTHKLELDDVIPTDTYQVSGEHLINGLPN.

A RdRp catalytic domain is found at 424–540; the sequence is PVAVGLDASR…VCEKADLKKL (117 aa).

This sequence belongs to the tombusviridae RNA polymerase family.

The catalysed reaction is RNA(n) + a ribonucleoside 5'-triphosphate = RNA(n+1) + diphosphate. Its function is as follows. RNA-dependent RNA polymerase that plays an essential role in the virus replication. The chain is RNA-directed RNA polymerase from Tobacco necrosis virus (strain A) (TNV-A).